The primary structure comprises 255 residues: Triosephosphate isomerase (255 aa).

10 to 12 (NWK) lines the substrate pocket. The active-site Electrophile is histidine 96. The Proton acceptor role is filled by glutamate 168. Substrate-binding positions include glycine 174, serine 213, and 234-235 (GG).

The protein belongs to the triosephosphate isomerase family. Homodimer.

The protein resides in the cytoplasm. The catalysed reaction is D-glyceraldehyde 3-phosphate = dihydroxyacetone phosphate. The protein operates within carbohydrate biosynthesis; gluconeogenesis. It participates in carbohydrate degradation; glycolysis; D-glyceraldehyde 3-phosphate from glycerone phosphate: step 1/1. Its function is as follows. Involved in the gluconeogenesis. Catalyzes stereospecifically the conversion of dihydroxyacetone phosphate (DHAP) to D-glyceraldehyde-3-phosphate (G3P). In Histophilus somni (strain 2336) (Haemophilus somnus), this protein is Triosephosphate isomerase.